Here is a 363-residue protein sequence, read N- to C-terminus: Probable L-tyrosine/L-aspartate decarboxylase (363 aa).

Lys-224 carries the post-translational modification N6-(pyridoxal phosphate)lysine.

The protein belongs to the group II decarboxylase family. MfnA subfamily. The cofactor is pyridoxal 5'-phosphate.

The catalysed reaction is L-tyrosine + H(+) = tyramine + CO2. It catalyses the reaction L-aspartate + H(+) = beta-alanine + CO2. It functions in the pathway cofactor biosynthesis; methanofuran biosynthesis. Its pathway is cofactor biosynthesis; coenzyme A biosynthesis. Functionally, catalyzes the decarboxylation of L-tyrosine to produce tyramine for methanofuran biosynthesis. Can also catalyze the decarboxylation of L-aspartate to produce beta-alanine for coenzyme A (CoA) biosynthesis. This Methanosphaerula palustris (strain ATCC BAA-1556 / DSM 19958 / E1-9c) protein is Probable L-tyrosine/L-aspartate decarboxylase.